Reading from the N-terminus, the 143-residue chain is Nucleoside diphosphate kinase (143 aa).

ATP contacts are provided by Lys11, Phe59, Arg87, Thr93, Arg104, and Asn114. Catalysis depends on His117, which acts as the Pros-phosphohistidine intermediate.

It belongs to the NDK family. As to quaternary structure, homotetramer. Mg(2+) serves as cofactor.

Its subcellular location is the cytoplasm. It catalyses the reaction a 2'-deoxyribonucleoside 5'-diphosphate + ATP = a 2'-deoxyribonucleoside 5'-triphosphate + ADP. The catalysed reaction is a ribonucleoside 5'-diphosphate + ATP = a ribonucleoside 5'-triphosphate + ADP. In terms of biological role, major role in the synthesis of nucleoside triphosphates other than ATP. The ATP gamma phosphate is transferred to the NDP beta phosphate via a ping-pong mechanism, using a phosphorylated active-site intermediate. The chain is Nucleoside diphosphate kinase from Shewanella piezotolerans (strain WP3 / JCM 13877).